The following is an 815-amino-acid chain: (-)-kolavenyl diphosphate synthase TPS14, chloroplastic (815 aa).

Residues 1 to 51 (MFMSSSSSSHARRPQLSSFSYLHPPLPFPGLSFFNTRDKRVNFDSTRIICI) constitute a chloroplast transit peptide. Lys247 provides a ligand contact to substrate. Residues Asp379 and Asp381 each contribute to the Mg(2+) site. The short motif at 379–382 (DIDD) is the DXDD motif element. Residue Lys465 coordinates substrate.

It belongs to the terpene synthase family. Tpsc subfamily. It depends on Mg(2+) as a cofactor.

It is found in the plastid. The protein localises to the chloroplast. It catalyses the reaction (2E,6E,10E)-geranylgeranyl diphosphate = (-)-kolavenyl diphosphate. Its activity is regulated as follows. Inhibited by high concentrations of magnesium. Its function is as follows. Diterpene synthase that catalyzes the formation of (-)-kolavenyl diphosphate from geranylgeranyl diphosphate (GGPP). The protein is (-)-kolavenyl diphosphate synthase TPS14, chloroplastic of Tripterygium wilfordii (Thunder God vine).